Consider the following 424-residue polypeptide: SWI/SNF and RSC complexes subunit arp42 (424 aa).

It belongs to the actin family. As to quaternary structure, component of the RSC complex composed of at least arp9, arp42, rsc1, rsc4, rsc7, rsc9, rsc58, sfh1, snf21, ssr1, ssr2, ssr3 and ssr4. The complex interacts with histone and histone variant components of centromeric chromatin. Component of the SWI/SNF global transcription activator complex composed of at least arp9, arp42, snf5, snf22, snf30, sbf59, sol1, ssr1, ssr2, ssr3, ssr4 and tfg3.

Its subcellular location is the cytoplasm. It localises to the nucleus. In terms of biological role, component of the chromatin structure remodeling complex (RSC), which is involved in transcription regulation and nucleosome positioning. Controls particularly membrane and organelle development genes. Part of the SWI/SNF complex, an ATP-dependent chromatin remodeling complex, required for the positive and negative regulation of gene expression of a large number of genes. It changes chromatin structure by altering DNA-histone contacts within a nucleosome, leading eventually to a change in nucleosome position, thus facilitating or repressing binding of gene-specific transcription factors. This chain is SWI/SNF and RSC complexes subunit arp42 (arp42), found in Schizosaccharomyces pombe (strain 972 / ATCC 24843) (Fission yeast).